The chain runs to 321 residues: Gibberellin 2-beta-dioxygenase 4 (321 aa).

The region spanning 156-269 is the Fe2OG dioxygenase domain; it reads DSDSVLRVNH…RLSTAYFAGP (114 aa). Residues histidine 193, aspartate 195, and histidine 250 each coordinate Fe cation. The active site involves arginine 260.

Belongs to the iron/ascorbate-dependent oxidoreductase family. GA2OX subfamily. Fe(2+) is required as a cofactor. In terms of tissue distribution, expressed at the base of the shoot apical meristem and developing leaf primordia.

The catalysed reaction is gibberellin A1 + 2-oxoglutarate + O2 = gibberellin A8 + succinate + CO2. The protein operates within plant hormone biosynthesis; gibberellin biosynthesis. Catalyzes the 2-beta-hydroxylation of several biologically active gibberellins, leading to the homeostatic regulation of their endogenous level. Catabolism of gibberellins (GAs) plays a central role in plant development. Converts GA9/GA20 to GA51/GA29 and GA4/GA1 to GA34/GA8. This chain is Gibberellin 2-beta-dioxygenase 4 (GA2OX4), found in Arabidopsis thaliana (Mouse-ear cress).